Here is a 287-residue protein sequence, read N- to C-terminus: Phospholipase A and acyltransferase 5 (287 aa).

2 disordered regions span residues 48-72 (PKQI…ASSQ) and 86-138 (DRGL…SNQK). Polar residues-rich tracts occupy residues 49 to 72 (KQIS…ASSQ) and 128 to 138 (LKNQAAESNQK). Residues 144 to 257 (LIEIFRIGYE…LRYGVPRSQQ (114 aa)) enclose the LRAT domain. Residues histidine 154 and histidine 166 contribute to the active site. The Acyl-thioester intermediate role is filled by cysteine 241.

This sequence belongs to the H-rev107 family. In terms of tissue distribution, expressed in testis.

It is found in the cytoplasm. It localises to the cytosol. The enzyme catalyses a 1,2-diacyl-sn-glycero-3-phosphocholine + H2O = a 1-acyl-sn-glycero-3-phosphocholine + a fatty acid + H(+). It catalyses the reaction a 1,2-diacyl-sn-glycero-3-phosphocholine + H2O = a 2-acyl-sn-glycero-3-phosphocholine + a fatty acid + H(+). It carries out the reaction 1-hexadecanoyl-2-(5Z,8Z,11Z,14Z-eicosatetraenoyl)-sn-glycero-3-phosphocholine + 1,2-di-(9Z-octadecenoyl)-sn-glycero-3-phosphoethanolamine = N-(5Z,8Z,11Z,14Z-eicosatetraenoyl)-1,2-di-(9Z-octadecenoyl)-sn-glycero-3-phosphoethanolamine + 1-hexadecanoyl-sn-glycero-3-phosphocholine + H(+). The catalysed reaction is 1,2-di-(9Z-octadecenoyl)-sn-glycero-3-phosphoethanolamine + 1,2-dihexadecanoyl-sn-glycero-3-phosphocholine = N-hexadecanoyl-1,2-di-(9Z-octadecenoyl)-sn-glycero-3-phosphoethanolamine + 1-hexadecanoyl-sn-glycero-3-phosphocholine + H(+). The enzyme catalyses 1,2-di-(9Z-octadecenoyl)-sn-glycero-3-phosphoethanolamine + 1,2-dihexadecanoyl-sn-glycero-3-phosphocholine = N-hexadecanoyl-1,2-di-(9Z-octadecenoyl)-sn-glycero-3-phosphoethanolamine + 2-hexadecanoyl-sn-glycero-3-phosphocholine + H(+). It catalyses the reaction a 1,2-diacyl-sn-glycero-3-phosphoethanolamine + a 1,2-diacyl-sn-glycero-3-phosphocholine = an N-acyl-1,2-diacyl-sn-glycero-3-phosphoethanolamine + a 1-acyl-sn-glycero-3-phosphocholine + H(+). It carries out the reaction a 1,2-diacyl-sn-glycero-3-phosphoethanolamine + a 1,2-diacyl-sn-glycero-3-phosphocholine = an N-acyl-1,2-diacyl-sn-glycero-3-phosphoethanolamine + a 2-acyl-sn-glycero-3-phosphocholine + H(+). The catalysed reaction is 1-hexadecanoyl-2-(9Z-octadecenoyl)-sn-glycero-3-phosphocholine + 1,2-di-(9Z-octadecenoyl)-sn-glycero-3-phosphoethanolamine = N,1,2-tri-(9Z-octadecenoyl)-sn-glycero-3-phosphoethanolamine + 1-hexadecanoyl-sn-glycero-3-phosphocholine + H(+). Exhibits both phospholipase A1/2 and acyltransferase activities. Shows phospholipase A1 (PLA1) and A2 (PLA2) activity, catalyzing the calcium-independent release of fatty acids from the sn-1 or sn-2 position of glycerophospholipids. Shows N-acyltransferase activity, catalyzing the calcium-independent transfer of a fatty acyl group at the sn-1 position of phosphatidylcholine (PC) and other glycerophospholipids to the primary amine of phosphatidylethanolamine (PE), forming N-acylphosphatidylethanolamine (NAPE), which serves as precursor for N-acylethanolamines (NAEs). The chain is Phospholipase A and acyltransferase 5 from Rattus norvegicus (Rat).